The primary structure comprises 296 residues: Meiotically up-regulated gene 2 protein (296 aa).

Belongs to the UPF0612 family.

The protein resides in the cytoplasm. The protein localises to the nucleus. Functionally, has a role in meiosis. This is Meiotically up-regulated gene 2 protein (mug2) from Schizosaccharomyces pombe (strain 972 / ATCC 24843) (Fission yeast).